The chain runs to 567 residues: uncharacterized protein (567 aa).

Over 1 to 31 the chain is Lumenal; sequence MLDTILINVFRRDGDDDDDDGQDPALQELYS. Residues 32 to 52 traverse the membrane as a helical segment; it reads SWALFILLVLLIGALLTSYYV. Topologically, residues 53-64 are cytoplasmic; the sequence is QSKKIRAIHETV. A helical transmembrane segment spans residues 65-85; it reads ISVFVGMVVGLIIRVSPGLII. The Lumenal portion of the chain corresponds to 86 to 87; that stretch reads QN. Residues 88-108 form a helical membrane-spanning segment; it reads MVSFHSTYFFNVLLPPIILNS. Over 109–128 the chain is Cytoplasmic; the sequence is GYELHQSNFFRNIGTILTFA. The chain crosses the membrane as a helical span at residues 129-149; that stretch reads FAGTFISAVTLGVLVYIFSFL. The Lumenal segment spans residues 150-159; that stretch reads NFENLSMTFV. A helical membrane pass occupies residues 160 to 180; it reads EALSMGATLSATDPVTVLAIF. Topologically, residues 181-188 are cytoplasmic; it reads NSYKVDQK. The helical transmembrane segment at 189 to 209 threads the bilayer; that stretch reads LYTIIFGESILNDAVAIVMFE. At 210–227 the chain is on the lumenal side; sequence TLQQFQGKTLHFFTLFSG. Residues 228 to 248 form a helical membrane-spanning segment; it reads IGIFIITFFISLLIGVSIGLI. Topologically, residues 249-277 are cytoplasmic; that stretch reads TALLLKYSYLRRYPSIESCIILLMAYTSY. Residues 278-298 form a helical membrane-spanning segment; that stretch reads FFSNGCHMSGVVSLLFCGITL. Topologically, residues 299 to 315 are lumenal; that stretch reads KHYAFFNMSYKAKLSTK. The chain crosses the membrane as a helical span at residues 316-338; that stretch reads YVFRVLAQLSENFIFIYLGMSLF. The Cytoplasmic segment spans residues 339–347; that stretch reads TQVDLVYKP. A helical membrane pass occupies residues 348–366; the sequence is IFILITTVAVTASRYMNVF. Topologically, residues 367–392 are lumenal; sequence PLSNLLNKFHRQRNGNLIDHIPYSYQ. A helical transmembrane segment spans residues 393–413; the sequence is MMLFWAGLRGAVGVALAAGFE. At 414-424 the chain is on the cytoplasmic side; that stretch reads GENAQTLRATT. Residues 425–445 form a helical membrane-spanning segment; it reads LVVVVLTLIIFGGTTARMLEI. The Lumenal portion of the chain corresponds to 446 to 567; it reads LHIETGVAAD…RDNLKNGTKK (122 aa). Phosphoserine is present on Ser-515.

Belongs to the monovalent cation:proton antiporter 1 (CPA1) transporter (TC 2.A.36) family.

It localises to the golgi apparatus membrane. This is an uncharacterized protein from Schizosaccharomyces pombe (strain 972 / ATCC 24843) (Fission yeast).